Reading from the N-terminus, the 522-residue chain is F-box/LRR-repeat protein 16 (522 aa).

In terms of domain architecture, F-box spans 38–84 (YDFTANLPDDCLAHIFQFLSAGDRKRCSLVSKRWLLVDGQNRHRLSL). LRR repeat units lie at residues 115–140 (SFSL…KLRG), 141–166 (CREI…SCGS), 169–191 (FGAK…SLKR), 266–290 (RLQV…HIVK), 291–316 (TPDC…HIDG), 319–344 (VKRI…VLIG), 348–369 (TYMS…ALCG), 370–393 (SGTI…KFCI), 395–420 (GCLI…KVKK), and 421–447 (CSLV…DDDE).

This is F-box/LRR-repeat protein 16 (FBL16) from Arabidopsis thaliana (Mouse-ear cress).